We begin with the raw amino-acid sequence, 855 residues long: DNA mismatch repair protein MutS (855 aa).

616–623 (GPNMGGKS) lines the ATP pocket.

This sequence belongs to the DNA mismatch repair MutS family.

This protein is involved in the repair of mismatches in DNA. It is possible that it carries out the mismatch recognition step. This protein has a weak ATPase activity. This Salmonella gallinarum (strain 287/91 / NCTC 13346) protein is DNA mismatch repair protein MutS.